The following is a 169-amino-acid chain: Major pepsin inhibitor 3 (169 aa).

An N-terminal signal peptide occupies residues 1-20 (MHVWLILSLASLWTSSIAYS). Pyrrolidone carboxylic acid is present on Q21. Disulfide bonds link C33–C79, C68–C86, and C99–C166. The segment at 135–169 (EEQQENQPPSSGMPHGAVPAGGLSPPPPPSFCTVQ) is disordered. A compositionally biased stretch (pro residues) spans 158–169 (SPPPPPSFCTVQ).

The protein belongs to the protease inhibitor I33 family. As to expression, body wall.

It localises to the secreted. Functionally, this is an inhibitor of the aspartic protease pepsin. The chain is Major pepsin inhibitor 3 from Ascaris suum (Pig roundworm).